We begin with the raw amino-acid sequence, 664 residues long: Fructose-1,6-bisphosphatase class 3 (664 aa).

Belongs to the FBPase class 3 family. Requires Mn(2+) as cofactor.

It catalyses the reaction beta-D-fructose 1,6-bisphosphate + H2O = beta-D-fructose 6-phosphate + phosphate. It functions in the pathway carbohydrate biosynthesis; gluconeogenesis. In Bacteroides fragilis (strain YCH46), this protein is Fructose-1,6-bisphosphatase class 3.